The primary structure comprises 230 residues: Germin-like protein 5-1 (230 aa).

Residues 1–20 form the signal peptide; it reads MAMVGRSLLLLLLLVTLAAG. Cys-38 and Cys-53 are joined by a disulfide. Residues 86–219 enclose the Cupin type-1 domain; the sequence is YGFTARSVDI…TLLTDEATVD (134 aa). Residues His-119, His-121, Glu-126, and His-167 each contribute to the Mn(2+) site. Asn-172 carries N-linked (GlcNAc...) asparagine glycosylation.

It belongs to the germin family. Oligomer (believed to be a pentamer but probably hexamer).

It localises to the secreted. The protein localises to the extracellular space. Its subcellular location is the apoplast. In terms of biological role, may play a role in plant defense. Probably has no oxalate oxidase activity even if the active site is conserved. This Oryza sativa subsp. japonica (Rice) protein is Germin-like protein 5-1.